A 254-amino-acid chain; its full sequence is Triosephosphate isomerase (254 aa).

Position 9–11 (9–11 (NWK)) interacts with substrate. His95 functions as the Electrophile in the catalytic mechanism. Glu167 functions as the Proton acceptor in the catalytic mechanism. Substrate-binding positions include Gly173, Ser213, and 234-235 (GG).

This sequence belongs to the triosephosphate isomerase family. As to quaternary structure, homodimer.

Its subcellular location is the cytoplasm. It carries out the reaction D-glyceraldehyde 3-phosphate = dihydroxyacetone phosphate. The protein operates within carbohydrate biosynthesis; gluconeogenesis. It functions in the pathway carbohydrate degradation; glycolysis; D-glyceraldehyde 3-phosphate from glycerone phosphate: step 1/1. Involved in the gluconeogenesis. Catalyzes stereospecifically the conversion of dihydroxyacetone phosphate (DHAP) to D-glyceraldehyde-3-phosphate (G3P). This is Triosephosphate isomerase from Roseiflexus castenholzii (strain DSM 13941 / HLO8).